A 445-amino-acid polypeptide reads, in one-letter code: Phosphoglucosamine mutase (445 aa).

S102 (phosphoserine intermediate) is an active-site residue. Mg(2+) contacts are provided by S102, D240, D242, and D244. S102 carries the phosphoserine modification.

It belongs to the phosphohexose mutase family. Mg(2+) is required as a cofactor. Post-translationally, activated by phosphorylation.

It carries out the reaction alpha-D-glucosamine 1-phosphate = D-glucosamine 6-phosphate. Its function is as follows. Catalyzes the conversion of glucosamine-6-phosphate to glucosamine-1-phosphate. The protein is Phosphoglucosamine mutase of Mycobacterium sp. (strain JLS).